The primary structure comprises 267 residues: Ribosomal RNA small subunit methyltransferase NEP1 (267 aa).

The tract at residues 1–46 (MSELKNGTTEPKKNETTQSDSKSKSTSTNKSSVPPASLVPVQPTAL) is disordered. Residues 16–32 (TTQSDSKSKSTSTNKSS) show a composition bias toward low complexity. S-adenosyl-L-methionine contacts are provided by residues L195, G222, 227-229 (GKD), and 242-247 (LSDYPL).

It belongs to the class IV-like SAM-binding methyltransferase superfamily. RNA methyltransferase NEP1 family. As to quaternary structure, homodimer.

The protein localises to the nucleus. It localises to the nucleolus. It carries out the reaction a pseudouridine in rRNA + S-adenosyl-L-methionine = an N(1)-methylpseudouridine in rRNA + S-adenosyl-L-homocysteine + H(+). S-adenosyl-L-methionine-dependent pseudouridine N(1)-methyltransferase that methylates the pseudouridine corresponding to position 1189 (Psi1189) in S.cerevisiae 18S rRNA. Involved the biosynthesis of the hypermodified N1-methyl-N3-(3-amino-3-carboxypropyl) pseudouridine (m1acp3-Psi) conserved in eukaryotic 18S rRNA. Also has an essential role in 40S ribosomal subunit biogenesis independent on its methyltransferase activity, facilitating the incorporation of ribosomal protein S19 during the formation of pre-ribosomes. The sequence is that of Ribosomal RNA small subunit methyltransferase NEP1 from Candida albicans (Yeast).